The sequence spans 195 residues: Dephospho-CoA kinase (195 aa).

The DPCK domain maps to 3 to 195 (IVGLTGGIGS…IALHENYLNH (193 aa)). 11 to 16 (GSGKSA) provides a ligand contact to ATP.

The protein belongs to the CoaE family.

The protein localises to the cytoplasm. The catalysed reaction is 3'-dephospho-CoA + ATP = ADP + CoA + H(+). It functions in the pathway cofactor biosynthesis; coenzyme A biosynthesis; CoA from (R)-pantothenate: step 5/5. In terms of biological role, catalyzes the phosphorylation of the 3'-hydroxyl group of dephosphocoenzyme A to form coenzyme A. The polypeptide is Dephospho-CoA kinase (Acinetobacter baylyi (strain ATCC 33305 / BD413 / ADP1)).